The primary structure comprises 396 residues: Phosphoglycerate kinase (396 aa).

Residues 23–25 (DFN), Arg-38, 61–64 (HMGK), Arg-122, and Arg-155 contribute to the substrate site. ATP is bound by residues Lys-206, Gly-296, Glu-327, and 353 to 356 (GGDS).

Belongs to the phosphoglycerate kinase family. As to quaternary structure, monomer.

The protein resides in the cytoplasm. It carries out the reaction (2R)-3-phosphoglycerate + ATP = (2R)-3-phospho-glyceroyl phosphate + ADP. It functions in the pathway carbohydrate degradation; glycolysis; pyruvate from D-glyceraldehyde 3-phosphate: step 2/5. This Clostridium botulinum (strain Eklund 17B / Type B) protein is Phosphoglycerate kinase.